Here is a 324-residue protein sequence, read N- to C-terminus: Olfactory receptor 2T2 (324 aa).

Topologically, residues 1–26 are extracellular; sequence MGMEGLLQNSTNFVLTGLITHPAFPG. Asn-9 carries N-linked (GlcNAc...) asparagine glycosylation. Residues 27–50 traverse the membrane as a helical segment; it reads LLFAIVFSIFVVAITANLVMILLI. Over 51 to 58 the chain is Cytoplasmic; it reads HMDSRLHT. Residues 59–80 traverse the membrane as a helical segment; it reads PMYFLLSQLSIMDTIYICITVP. At 81-101 the chain is on the extracellular side; the sequence is KMLQDLLSKDKTISFLGCAVQ. Cys-98 and Cys-190 are oxidised to a cystine. The helical transmembrane segment at 102–121 threads the bilayer; sequence IFLYLTLIGGEFFLLGLMAY. The Cytoplasmic segment spans residues 122 to 140; that stretch reads DRYVAVCNPLRYPLLMNRR. The helical transmembrane segment at 141–159 threads the bilayer; it reads VCLFMVVGSWVGGSLDGFM. Topologically, residues 160–196 are extracellular; it reads LTPVTMSFPFCRSREINHFFCEIPAVLKLSCTDTSLY. The helical transmembrane segment at 197-220 threads the bilayer; sequence ETLMYACCVLMLLIPLSVISVSYT. Topologically, residues 221–237 are cytoplasmic; that stretch reads HILLTVHRMNSAEGRRK. Residues 238–260 form a helical membrane-spanning segment; the sequence is AFATCSSHIMVVSVFYGAAFYTN. Topologically, residues 261–273 are extracellular; that stretch reads VLPHSYHTPEKDK. The chain crosses the membrane as a helical span at residues 274–293; the sequence is VVSAFYTILTPMLNPLIYSL. The Cytoplasmic portion of the chain corresponds to 294 to 324; the sequence is RNKDVAAALRKVLGRCGSSQSIRVATVIRKG.

This sequence belongs to the G-protein coupled receptor 1 family.

It localises to the cell membrane. Odorant receptor. The sequence is that of Olfactory receptor 2T2 (OR2T2) from Homo sapiens (Human).